The following is a 117-amino-acid chain: Protein Turandot F (117 aa).

Positions 1 to 22 are cleaved as a signal peptide; it reads MKTVILFSFLLVLLGYLGAGHA.

The protein belongs to the Turandot family.

It is found in the secreted. Its function is as follows. A humoral factor that may play a role in stress tolerance. This Drosophila sechellia (Fruit fly) protein is Protein Turandot F.